The sequence spans 222 residues: Cytidylate kinase (222 aa).

ATP is bound at residue 7 to 15; it reads GPAGAGKST.

The protein belongs to the cytidylate kinase family. Type 1 subfamily.

It is found in the cytoplasm. It carries out the reaction CMP + ATP = CDP + ADP. The catalysed reaction is dCMP + ATP = dCDP + ADP. This is Cytidylate kinase from Carboxydothermus hydrogenoformans (strain ATCC BAA-161 / DSM 6008 / Z-2901).